We begin with the raw amino-acid sequence, 447 residues long: Adenylosuccinate synthetase (447 aa).

GTP is bound by residues 12–18 (GDEGKGK) and 40–42 (GHT). The active-site Proton acceptor is the Asp-13. 2 residues coordinate Mg(2+): Asp-13 and Gly-40. Residues 13–16 (DEGK), 38–41 (NAGH), Thr-128, Arg-142, Gln-223, Thr-238, and Arg-302 each bind IMP. His-41 serves as the catalytic Proton donor. 298 to 304 (TTTGRKR) provides a ligand contact to substrate. Residues Arg-304, 330–332 (KLD), and 412–414 (SLG) contribute to the GTP site.

The protein belongs to the adenylosuccinate synthetase family. In terms of assembly, homodimer. The cofactor is Mg(2+).

The protein resides in the cytoplasm. The enzyme catalyses IMP + L-aspartate + GTP = N(6)-(1,2-dicarboxyethyl)-AMP + GDP + phosphate + 2 H(+). Its pathway is purine metabolism; AMP biosynthesis via de novo pathway; AMP from IMP: step 1/2. In terms of biological role, plays an important role in the de novo pathway of purine nucleotide biosynthesis. Catalyzes the first committed step in the biosynthesis of AMP from IMP. The chain is Adenylosuccinate synthetase from Trichormus variabilis (strain ATCC 29413 / PCC 7937) (Anabaena variabilis).